We begin with the raw amino-acid sequence, 141 residues long: Large ribosomal subunit protein uL11c (141 aa).

It belongs to the universal ribosomal protein uL11 family. As to quaternary structure, part of the ribosomal stalk of the 50S ribosomal subunit. Interacts with L10 and the large rRNA to form the base of the stalk. L10 forms an elongated spine to which L12 dimers bind in a sequential fashion forming a multimeric L10(L12)X complex.

Its subcellular location is the plastid. The protein localises to the chloroplast. Forms part of the ribosomal stalk which helps the ribosome interact with GTP-bound translation factors. This chain is Large ribosomal subunit protein uL11c, found in Thalassiosira pseudonana (Marine diatom).